A 218-amino-acid chain; its full sequence is Grancalcin (218 aa).

EF-hand domains are found at residues 49–84 (SSAG…SGIS), 85–119 (GTYS…KELW), 120–155 (SALN…MGYR), and 156–191 (LSPQ…ALTD). Ca(2+) contacts are provided by aspartate 103, aspartate 105, threonine 107, lysine 109, aspartate 133, aspartate 135, serine 137, threonine 139, and glutamate 144.

As to quaternary structure, homodimer. Interacts with SRI and LCP1.

The protein localises to the cytoplasm. The protein resides in the cytoplasmic granule membrane. Calcium-binding protein that may play a role in the adhesion of neutrophils to fibronectin. May play a role in the formation of focal adhesions. In Pongo abelii (Sumatran orangutan), this protein is Grancalcin (GCA).